Here is a 124-residue protein sequence, read N- to C-terminus: Glutaredoxin-2 (124 aa).

A disulfide bond links C13 and C16.

This sequence belongs to the glutaredoxin family. In terms of assembly, homodimer.

The protein localises to the host cytoplasm. Glutaredoxin necessary for virion morphogenesis and virus replication. Functions as a thiol-disulfide transfer protein between membrane-associated OPG128 and substrates OPG095 or OPG053. The complete pathway for formation of disulfide bonds in intracellular virion membrane proteins sequentially involves oxidation of OPG072, OPG128 and OPG088. Exhibit thioltransferase and dehydroascorbate reductase activities in vitro. This is Glutaredoxin-2 (OPG088) from Mus musculus (Mouse).